We begin with the raw amino-acid sequence, 280 residues long: Fasciclin-like arabinogalactan protein 3 (280 aa).

The first 24 residues, 1–24 (MGLKVSSSLLCLTILLAVSSIVSA), serve as a signal peptide directing secretion. The FAS1 domain occupies 25–169 (VNITRVLEKY…LSVVQISMPI (145 aa)). Residues Asn26, Asn126, and Asn159 are each glycosylated (N-linked (GlcNAc...) asparagine). Pro residues predominate over residues 180 to 193 (VPPPPPMSSPPAPS). The segment at 180–262 (VPPPPPMSSP…EPPSSASNTG (83 aa)) is disordered. Low complexity predominate over residues 219 to 234 (APETAPASAPSESDSP). The GPI-anchor amidated serine moiety is linked to residue Ser256. A propeptide spans 257-280 (SASNTGLSFGAVLVLGFVASFVGF) (removed in mature form).

The protein belongs to the fasciclin-like AGP family.

It is found in the cell membrane. May be a cell surface adhesion protein. This is Fasciclin-like arabinogalactan protein 3 (FLA3) from Arabidopsis thaliana (Mouse-ear cress).